The following is a 578-amino-acid chain: Membrane protein insertase YidC (578 aa).

A helical membrane pass occupies residues 7–27; the sequence is FLAIAISLGILLGFQGLYRHF. Residues 35–70 form a disordered region; that stretch reads ARTATNAGQGKPNNTLGAVPTDATASQSPPPKEGAR. The segment covering 37–50 has biased composition (polar residues); the sequence is TATNAGQGKPNNTL. A run of 4 helical transmembrane segments spans residues 362–382, 436–456, 491–511, and 530–550; these read LVGN…AAFY, LPML…FVTI, HISP…TMYL, and FMPI…VIYW.

It belongs to the OXA1/ALB3/YidC family. Type 1 subfamily. Interacts with the Sec translocase complex via SecD. Specifically interacts with transmembrane segments of nascent integral membrane proteins during membrane integration.

It localises to the cell inner membrane. Its function is as follows. Required for the insertion and/or proper folding and/or complex formation of integral membrane proteins into the membrane. Involved in integration of membrane proteins that insert both dependently and independently of the Sec translocase complex, as well as at least some lipoproteins. Aids folding of multispanning membrane proteins. The protein is Membrane protein insertase YidC of Granulibacter bethesdensis (strain ATCC BAA-1260 / CGDNIH1).